Consider the following 424-residue polypeptide: Kynureninase (424 aa).

Residues leucine 106, threonine 107, phenylalanine 134–aspartate 137, aspartate 219, histidine 222, and tyrosine 244 each bind pyridoxal 5'-phosphate. Position 245 is an N6-(pyridoxal phosphate)lysine (lysine 245). Pyridoxal 5'-phosphate contacts are provided by tryptophan 274 and asparagine 302.

It belongs to the kynureninase family. As to quaternary structure, homodimer. Pyridoxal 5'-phosphate serves as cofactor.

It catalyses the reaction L-kynurenine + H2O = anthranilate + L-alanine + H(+). It carries out the reaction 3-hydroxy-L-kynurenine + H2O = 3-hydroxyanthranilate + L-alanine + H(+). The protein operates within amino-acid degradation; L-kynurenine degradation; L-alanine and anthranilate from L-kynurenine: step 1/1. It functions in the pathway cofactor biosynthesis; NAD(+) biosynthesis; quinolinate from L-kynurenine: step 2/3. Catalyzes the cleavage of L-kynurenine (L-Kyn) and L-3-hydroxykynurenine (L-3OHKyn) into anthranilic acid (AA) and 3-hydroxyanthranilic acid (3-OHAA), respectively. The protein is Kynureninase of Xanthomonas campestris pv. campestris (strain B100).